Here is a 325-residue protein sequence, read N- to C-terminus: Golgi to ER traffic protein 4 homolog B (325 aa).

Disordered regions lie at residues 1–22 (MAAA…GGVQ) and 306–325 (SGED…IELD). The span at 307–317 (GEDDDVEDGQE) shows a compositional bias: acidic residues.

It belongs to the GET4 family. In terms of assembly, component of the bag6/bat3 complex.

The protein localises to the cytoplasm. The protein resides in the cytosol. Functionally, as part of a cytosolic protein quality control complex, the bag6/bat3 complex, maintains misfolded and hydrophobic patches-containing proteins in a soluble state and participates in their proper delivery to the endoplasmic reticulum or alternatively can promote their sorting to the proteasome where they undergo degradation. The bag6/bat3 complex is involved in the post-translational delivery of tail-anchored/type II transmembrane proteins to the endoplasmic reticulum membrane. Similarly, the bag6/bat3 complex also functions as a sorting platform for proteins of the secretory pathway that are mislocalized to the cytosol either delivering them to the proteasome for degradation or to the endoplasmic reticulum. The bag6/bat3 complex also plays a role in the endoplasmic reticulum-associated degradation (ERAD), a quality control mechanism that eliminates unwanted proteins of the endoplasmic reticulum through their retrotranslocation to the cytosol and their targeting to the proteasome. It maintains these retrotranslocated proteins in an unfolded yet soluble state condition in the cytosol to ensure their proper delivery to the proteasome. In Xenopus laevis (African clawed frog), this protein is Golgi to ER traffic protein 4 homolog B (get4-b).